Reading from the N-terminus, the 662-residue chain is uncharacterized protein (662 aa).

FAD contacts are provided by serine 145, glutamate 164, tryptophan 173, aspartate 184, and tyrosine 190. Residues 638–662 (SRLETSGVPREGVQRPGSRLRRRPS) form a disordered region.

This sequence belongs to the FAD-binding monooxygenase family. It depends on FAD as a cofactor.

This is an uncharacterized protein from Sinorhizobium fredii (strain NBRC 101917 / NGR234).